The following is a 143-amino-acid chain: 3-dehydroquinate dehydratase (143 aa).

Residue Tyr22 is the Proton acceptor of the active site. Residues Asn73, His79, and Asp86 each contribute to the substrate site. His99 (proton donor) is an active-site residue. Substrate-binding positions include 100–101 and Arg110; that span reads IS.

It belongs to the type-II 3-dehydroquinase family. In terms of assembly, homododecamer.

It carries out the reaction 3-dehydroquinate = 3-dehydroshikimate + H2O. The protein operates within metabolic intermediate biosynthesis; chorismate biosynthesis; chorismate from D-erythrose 4-phosphate and phosphoenolpyruvate: step 3/7. In terms of biological role, catalyzes a trans-dehydration via an enolate intermediate. This chain is 3-dehydroquinate dehydratase, found in Salinispora arenicola (strain CNS-205).